The following is a 510-amino-acid chain: ATP synthase subunit alpha, chloroplastic (510 aa).

170 to 177 (GDRQTGKT) is a binding site for ATP.

It belongs to the ATPase alpha/beta chains family. In terms of assembly, F-type ATPases have 2 components, CF(1) - the catalytic core - and CF(0) - the membrane proton channel. CF(1) has five subunits: alpha(3), beta(3), gamma(1), delta(1), epsilon(1). CF(0) has four main subunits: a, b, b' and c.

The protein resides in the plastid. It is found in the chloroplast thylakoid membrane. It catalyses the reaction ATP + H2O + 4 H(+)(in) = ADP + phosphate + 5 H(+)(out). Its function is as follows. Produces ATP from ADP in the presence of a proton gradient across the membrane. The alpha chain is a regulatory subunit. The sequence is that of ATP synthase subunit alpha, chloroplastic from Lotus japonicus (Lotus corniculatus var. japonicus).